A 918-amino-acid polypeptide reads, in one-letter code: Glutamate receptor 2.5 (918 aa).

Positions 1-30 (MSLFHHLVSRFLSLWLLIFLVFLVLSLGKS) are cleaved as a signal peptide. Residues 31-586 (QKEALQVKVG…WVFLKPLTKE (556 aa)) are Extracellular-facing. N46, N58, N122, N336, N340, and N546 each carry an N-linked (GlcNAc...) asparagine glycan. The chain crosses the membrane as a helical span at residues 587–607 (LWLVTAASFLYIGIMVWIFEY). The Cytoplasmic portion of the chain corresponds to 608–616 (QADEEFREQ). The helical transmembrane segment at 617–637 (MIIDKISSVFYFSFSTLFFAH) threads the bilayer. The Cytoplasmic segment spans residues 638-647 (RRPSESFFTR). A helical membrane pass occupies residues 648-668 (VLVVVWCFVLLILTQSYTATL). The Extracellular portion of the chain corresponds to 669–828 (TSMLTVQELR…DSPIQLDHHS (160 aa)). N791 is a glycosylation site (N-linked (GlcNAc...) asparagine). A helical transmembrane segment spans residues 829–849 (FEALFLIVFVVSVILLLLMLA). Residues 850-918 (SRGYQERQHN…VAPLSRLKSA (69 aa)) are Cytoplasmic-facing. The disordered stretch occupies residues 857 to 881 (QHNASPNLPNDQANAAQEEVNEEGN). The segment covering 866–881 (NDQANAAQEEVNEEGN) has biased composition (low complexity).

Belongs to the glutamate-gated ion channel (TC 1.A.10.1) family. May form heteromers. As to expression, expressed predominantly in roots.

Its subcellular location is the membrane. Functionally, glutamate-gated receptor that probably acts as a non-selective cation channel. May be involved in light-signal transduction and calcium homeostasis via the regulation of calcium influx into cells. This is Glutamate receptor 2.5 (GLR2.5) from Arabidopsis thaliana (Mouse-ear cress).